A 728-amino-acid chain; its full sequence is Phomopsene synthase (728 aa).

The tract at residues 1-327 (MEYRYSYVID…PRYHSDQSLD (327 aa)) is terpene cyclase. Mg(2+)-binding residues include aspartate 94 and aspartate 98. Substrate is bound by residues aspartate 94, aspartate 98, 181–184 (RIVD), asparagine 226, 230–234 (SWEKE), and 319–320 (RY). Residues 94–98 (DDLVD) carry the DDXXD 1 motif. The short motif at 226–234 (NDVQSWEKE) is the NSE/DTE element. Residues 328–728 (EMMVARMKYG…FRFLLSLLKV (401 aa)) are prenyltransferase. Positions 352 to 363 (ENRGTKRTHQDD) are enriched in basic and acidic residues. A disordered region spans residues 352-379 (ENRGTKRTHQDDTEGVQSVKRFNGASTK). A run of 3 repeats spans residues 381–386 (GINGTN), 387–392 (GINGLN), and 393–398 (GINGSN). The segment at 381–398 (GINGTNGINGLNGINGSN) is 3 X 6 AA approximate tandem repeats. Positions 447, 450, and 479 each coordinate isopentenyl diphosphate. Positions 486 and 490 each coordinate Mg(2+). The short motif at 486–490 (DDVQD) is the DDXXD 2 element. Dimethylallyl diphosphate is bound at residue arginine 495. Residue arginine 496 participates in isopentenyl diphosphate binding. 6 residues coordinate dimethylallyl diphosphate: lysine 574, threonine 575, glutamine 610, asparagine 617, lysine 627, and lysine 637.

In the N-terminal section; belongs to the terpene synthase family. This sequence in the C-terminal section; belongs to the FPP/GGPP synthase family. In terms of assembly, hexamer. The cofactor is Mg(2+).

It catalyses the reaction isopentenyl diphosphate + (2E,6E)-farnesyl diphosphate = (2E,6E,10E)-geranylgeranyl diphosphate + diphosphate. The protein operates within secondary metabolite biosynthesis; terpenoid biosynthesis. Its function is as follows. Bifunctional terpene synthase; part of the gene cluster that mediates the biosynthesis of the diterpene methyl phomopsenonate. At first, the universal precursor of diterpene, geranylgeranyl diphosphate (GGPP) is provided and is cyclized by the unusual bifunctional terpene synthase PaPS to give phomopsene. The C-terminal prenyltransferase domain of PaPS catalyzes formation of GGPP, whereas the N-terminal terpene cyclase domain catalyzes the cyclization of GGPP to phomopsene. Since the oxidation of a methylgroup to a carboxyl group is frequently catalyzed by a cytochrome P450 monooxygenase, the C-16 methyl group would be oxidized by the cluster-specific cytochrome P450 monooxygenase ORF3. Subsequently, oxidation of the allylic position and methylation of the carboxyl group may give methyl phomopsenonate. Although further study is necessary to identify genes such as a monooxygenase and a methyltransferase, the predicted functions of genes on the cluster are correlated with the structure of methyl phomopsenonate. This chain is Phomopsene synthase, found in Phomopsis amygdali (Fusicoccum amygdali).